A 360-amino-acid chain; its full sequence is 45 kDa calcium-binding protein (360 aa).

Positions 1-29 (MVSKQAFLFSLGSLYLSLLFIFLLMDVYA) are cleaved as a signal peptide. An N-linked (GlcNAc...) asparagine glycan is attached at asparagine 33. EF-hand domains lie at 96-131 (RNRR…KTEE), 135-170 (EAVN…SKGF), 231-266 (MLKF…TVEN), 276-311 (WVRD…MNEY), and 312-347 (NALN…FTGS). Residues aspartate 109, asparagine 111, aspartate 113, glutamine 115, glutamate 120, aspartate 148, aspartate 150, aspartate 152, histidine 154, glutamate 159, aspartate 244, aspartate 246, aspartate 248, lysine 250, glutamate 255, aspartate 289, asparagine 291, aspartate 293, glutamate 300, aspartate 325, asparagine 327, aspartate 329, and glutamate 336 each coordinate Ca(2+).

The protein belongs to the CREC family.

It localises to the golgi apparatus lumen. Its function is as follows. May regulate calcium-dependent activities in the endoplasmic reticulum lumen or post-ER compartment. This is 45 kDa calcium-binding protein (sdf4) from Xenopus laevis (African clawed frog).